Here is a 441-residue protein sequence, read N- to C-terminus: MESNTNSQGQGIIPQSYHSSIFFSISKGSDKIGGLLEYLEIIKKHNINITRIESRPSKTEKKDYDFFLDLEYPTENNKEVEKVIKDLEEKGVKATTLQESSNQTYAPWFPRKISDLDLFANKVLEMGSDLTSDHPGASDPVYRERRREIAKIASTYKHGDEIPRIDYTEEEIKTWGVVYNRLKELFPTNACHQHAYIFPLLEQNCGYSPDNIPQLQDISNFLQECTGWRIRPVQGLLSARDFLNGLAFRVFHATQYIRHPSVPLYTPEPDCCHELLGHVPLLADPDFADFSQEIGLASIGASDEDIQLLSTCYWFTVEFGLCKEGDTIRAYGAGILSSTGEMEHFLTDKAKKLPFNPFDACNTEYPITTFQPLYYVAESFQKAKEQMRQFADSFKKPFSIRYNPYTQSIEILDNKDKLLNICNDIRNQSEILADAISKLKA.

Residues 23-102 (FSISKGSDKI…KATTLQESSN (80 aa)) form the ACT domain. Residues histidine 273, histidine 278, and glutamate 318 each contribute to the Fe cation site.

Belongs to the biopterin-dependent aromatic amino acid hydroxylase family. In terms of assembly, homotetramer. It depends on Fe(2+) as a cofactor.

The catalysed reaction is (6R)-L-erythro-5,6,7,8-tetrahydrobiopterin + L-phenylalanine + O2 = (4aS,6R)-4a-hydroxy-L-erythro-5,6,7,8-tetrahydrobiopterin + L-tyrosine. It carries out the reaction (6R)-L-erythro-5,6,7,8-tetrahydrobiopterin + L-tryptophan + O2 = 5-hydroxy-L-tryptophan + (4aS,6R)-4a-hydroxy-L-erythro-5,6,7,8-tetrahydrobiopterin. It functions in the pathway amino-acid degradation; L-phenylalanine degradation; acetoacetate and fumarate from L-phenylalanine: step 1/6. Functionally, catalyzes the hydroxylation of L-phenylalanine. Hydroxylates L-tryptophan to 5-hydroxy-L-tryptophan but does not hydroxylate L-tyrosine to L-DOPA. It uses D-threo-tetrahydrodictyopterin (DH4), also known as dictyoperin, as a cofactor. In Dictyostelium discoideum (Social amoeba), this protein is Phenylalanine-4-hydroxylase (pah).